Reading from the N-terminus, the 110-residue chain is Large ribosomal subunit protein uL22 (110 aa).

The protein belongs to the universal ribosomal protein uL22 family. Part of the 50S ribosomal subunit.

Its function is as follows. This protein binds specifically to 23S rRNA; its binding is stimulated by other ribosomal proteins, e.g. L4, L17, and L20. It is important during the early stages of 50S assembly. It makes multiple contacts with different domains of the 23S rRNA in the assembled 50S subunit and ribosome. In terms of biological role, the globular domain of the protein is located near the polypeptide exit tunnel on the outside of the subunit, while an extended beta-hairpin is found that lines the wall of the exit tunnel in the center of the 70S ribosome. The chain is Large ribosomal subunit protein uL22 from Histophilus somni (strain 129Pt) (Haemophilus somnus).